A 249-amino-acid chain; its full sequence is Serine 3-dehydrogenase (249 aa).

6-30 serves as a coordination point for NADP(+); the sequence is LITGATSGFGQATAQRFVKEGWKVI. A substrate-binding site is contributed by Ser135. The active-site Proton acceptor is Tyr148.

It belongs to the short-chain dehydrogenases/reductases (SDR) family. As to quaternary structure, homotetramer.

The enzyme catalyses L-serine + NADP(+) = aminoacetaldehyde + CO2 + NADPH. Catalyzes the oxidation of the hydroxyl group of serine to form 2-aminomalonate semialdehyde which is spontaneously converted into 2-aminoacetaldehyde and CO(2). Also acts on D-serine, L-glycerate, D-glycerate and 2-methyl-DL-serine. Does not act on O-methyl-DL-serine and L-threonine. This Rhizobium radiobacter (Agrobacterium tumefaciens) protein is Serine 3-dehydrogenase (sdh).